We begin with the raw amino-acid sequence, 1102 residues long: Voltage-gated delayed rectifier potassium channel KCNH8 (1102 aa).

The Cytoplasmic portion of the chain corresponds to 1-225 (MPVMKGLLAP…HFSTFKAGWD (225 aa)). Residues 18–90 (IATRFDGTHS…LQIEKSLEEK (73 aa)) form the PAS domain. Positions 93 to 145 (FKGEIMFYKKNGAPFWCLLDIVPIKNEKGDVVLFLASFKDITDTKVKITSEDK) constitute a PAC domain. Residues 142–151 (SEDKKEDRTK) show a composition bias toward basic and acidic residues. The segment at 142-162 (SEDKKEDRTKGRSRAGSHFDS) is disordered. The chain crosses the membrane as a helical span at residues 226–246 (WLILLATFYVAVTVPYNVCFI). At 247–255 (GNEDLSTTR) the chain is on the extracellular side. Residues 256-276 (STTVSDIAVEILFIIDIILNF) form a helical membrane-spanning segment. Residues 277-298 (RTTYVSKSGQVIFEARSICIHY) lie on the Cytoplasmic side of the membrane. A helical transmembrane segment spans residues 299 to 319 (VTTWFIIDLIAALPFDLLYAF). N-linked (GlcNAc...) asparagine glycosylation is present at Asn320. Topologically, residues 320–327 (NVTVVSLV) are extracellular. A helical; Voltage-sensor membrane pass occupies residues 328-348 (HLLKTVRLLRLLRLLQKLDRY). At 349-357 (SQHSTIVLT) the chain is on the cytoplasmic side. A helical transmembrane segment spans residues 358–378 (LLMSMFALLAHWMACIWYVIG). The Extracellular segment spans residues 379–419 (KMEREDNSLLKWEVGWLHELGKRLESPYYGNNTLGGPSIRS). Asn409 carries N-linked (GlcNAc...) asparagine glycosylation. Positions 420 to 440 (AYIAALYFTLSSLTSVGFGNV) form an intramembrane region, pore-forming. Residues 434–439 (SVGFGN) carry the Selectivity filter motif. The Extracellular segment spans residues 441–448 (SANTDAEK). Residues 449 to 469 (IFSICTMLIGALMHALVFGNV) traverse the membrane as a helical segment. Topologically, residues 470–1102 (TAIIQRMYSR…DVKDSKAINV (633 aa)) are cytoplasmic. Residues 551–668 (LFECASRGCL…HKFVEDIQHD (118 aa)) form a cNMP-binding domain region. The segment covering 684 to 693 (RLSNKSTVSQ) has biased composition (polar residues). Disordered stretches follow at residues 684–743 (RLSN…KKTG), 764–841 (HSPI…PEPR), and 960–991 (LVGS…YSPS). Acidic residues predominate over residues 710 to 723 (VEDEEEEEVEEEET). Over residues 724–737 (TSLSPIYTRGSSVS) the composition is skewed to polar residues. Positions 968 to 984 (TEAHEQNPADSELHHSP) are enriched in basic and acidic residues.

Belongs to the potassium channel family. H (Eag) (TC 1.A.1.20) subfamily. Kv12.1/KCNH8 sub-subfamily. As to quaternary structure, the potassium channel is probably composed of a homo- or heterotetrameric complex of pore-forming alpha subunits that can associate with modulating beta subunits.

The protein localises to the membrane. It catalyses the reaction K(+)(in) = K(+)(out). In terms of biological role, pore-forming (alpha) subunit of a voltage-gated delayed rectifier potassium channel that mediates outward-rectifying potassium currents. Elicits a slowly activating, non-inactivating and slowly deactivation outwards potassium current at depolarizating voltages from -30 mV to +50mV. Shows no obvious change in the activation rate from different holding potentials. Activation is strongly dependent on the pH of the external solution. This chain is Voltage-gated delayed rectifier potassium channel KCNH8, found in Mus musculus (Mouse).